The chain runs to 290 residues: Signal recognition particle receptor subunit beta (290 aa).

A helical transmembrane segment spans residues 44 to 64 (VLLLALFTLIFIIIISKLFGS). GTP contacts are provided by residues 92–100 (GLSNAGKTA), 114–117 (THTS), G140, and A268.

The protein belongs to the SRP receptor beta subunit family. In terms of assembly, heterodimer of an alpha and a beta chain.

It localises to the endoplasmic reticulum membrane. Its function is as follows. Component of the signal recognition particle (SRP) complex receptor (SR). Ensures, in conjunction with the SRP complex, the correct targeting of the nascent secretory proteins to the endoplasmic reticulum membrane system. May mediate the membrane association of SR. The polypeptide is Signal recognition particle receptor subunit beta (srprb) (Dictyostelium discoideum (Social amoeba)).